Consider the following 542-residue polypeptide: Hydroxylamine reductase (542 aa).

Positions 3, 6, 15, and 21 each coordinate [4Fe-4S] cluster. Hybrid [4Fe-2O-2S] cluster-binding residues include histidine 243, glutamate 267, cysteine 311, cysteine 398, cysteine 426, cysteine 451, glutamate 485, and lysine 487. Cysteine 398 is modified (cysteine persulfide).

This sequence belongs to the HCP family. It depends on [4Fe-4S] cluster as a cofactor. Requires hybrid [4Fe-2O-2S] cluster as cofactor.

The protein resides in the cytoplasm. The enzyme catalyses A + NH4(+) + H2O = hydroxylamine + AH2 + H(+). Its function is as follows. Catalyzes the reduction of hydroxylamine to form NH(3) and H(2)O. The protein is Hydroxylamine reductase of Syntrophobacter fumaroxidans (strain DSM 10017 / MPOB).